A 1030-amino-acid polypeptide reads, in one-letter code: Probable serine/threonine-protein kinase SIS8 (1030 aa).

2 stretches are compositionally biased toward polar residues: residues 44-58 (PNQS…STTK) and 399-419 (YSAS…NGIE). Disordered regions lie at residues 44 to 84 (PNQS…PEIK), 399 to 474 (YSAS…KAPF), 555 to 625 (TVES…ASST), and 689 to 736 (LGSN…SDCD). 3 stretches are compositionally biased toward basic and acidic residues: residues 426 to 435 (TEFRTGEHRS), 458 to 471 (ISRE…KVEK), and 560 to 580 (NSTE…EGRH). Positions 613 to 625 (SQSDSSHSEASST) are enriched in low complexity. The Protein kinase domain occupies 748–1003 (ITVGERIGLG…AEIMASLKRL (256 aa)). ATP-binding positions include 754–762 (IGLGSYGEV) and lysine 775. Aspartate 871 functions as the Proton acceptor in the catalytic mechanism. Over residues 1007–1023 (VTGSNIPRPVPSSSSLP) the composition is skewed to polar residues. The disordered stretch occupies residues 1007-1030 (VTGSNIPRPVPSSSSLPTEHEQKD).

The protein belongs to the protein kinase superfamily. Ser/Thr protein kinase family. In terms of assembly, interacts with UGT72E1. As to expression, expressed roots, rosette and cauline leaves, and at lower levels in flowers and siliques.

It is found in the nucleus. It catalyses the reaction L-seryl-[protein] + ATP = O-phospho-L-seryl-[protein] + ADP + H(+). The enzyme catalyses L-threonyl-[protein] + ATP = O-phospho-L-threonyl-[protein] + ADP + H(+). In terms of biological role, acts as a negative regulator of salt tolerance. Mediates sugar response during early seedling development. This is Probable serine/threonine-protein kinase SIS8 from Arabidopsis thaliana (Mouse-ear cress).